The primary structure comprises 413 residues: Putative competence-damage inducible protein (413 aa).

It belongs to the CinA family.

In Lacticaseibacillus casei (strain BL23) (Lactobacillus casei), this protein is Putative competence-damage inducible protein.